The following is a 270-amino-acid chain: Phosphatidylglycerol--prolipoprotein diacylglyceryl transferase (270 aa).

Transmembrane regions (helical) follow at residues 10 to 30, 56 to 76, 92 to 112, 120 to 140, 174 to 194, 202 to 222, and 236 to 256; these read VALA…LIGI, LIFW…VLFY, WKGG…AWWF, FFQL…AGRI, PSQL…LYIF, MAVS…VEFV, and WVTM…GLLW. Position 139 (arginine 139) interacts with a 1,2-diacyl-sn-glycero-3-phospho-(1'-sn-glycerol).

This sequence belongs to the Lgt family.

Its subcellular location is the cell inner membrane. The catalysed reaction is L-cysteinyl-[prolipoprotein] + a 1,2-diacyl-sn-glycero-3-phospho-(1'-sn-glycerol) = an S-1,2-diacyl-sn-glyceryl-L-cysteinyl-[prolipoprotein] + sn-glycerol 1-phosphate + H(+). Its pathway is protein modification; lipoprotein biosynthesis (diacylglyceryl transfer). Catalyzes the transfer of the diacylglyceryl group from phosphatidylglycerol to the sulfhydryl group of the N-terminal cysteine of a prolipoprotein, the first step in the formation of mature lipoproteins. This Pseudomonas fluorescens (strain SBW25) protein is Phosphatidylglycerol--prolipoprotein diacylglyceryl transferase.